Consider the following 126-residue polypeptide: Aspartate 1-decarboxylase (126 aa).

The active-site Schiff-base intermediate with substrate; via pyruvic acid is S25. The residue at position 25 (S25) is a Pyruvic acid (Ser). T57 provides a ligand contact to substrate. Y58 serves as the catalytic Proton donor. 73-75 (GAA) contributes to the substrate binding site.

The protein belongs to the PanD family. Heterooctamer of four alpha and four beta subunits. Pyruvate is required as a cofactor. Post-translationally, is synthesized initially as an inactive proenzyme, which is activated by self-cleavage at a specific serine bond to produce a beta-subunit with a hydroxyl group at its C-terminus and an alpha-subunit with a pyruvoyl group at its N-terminus.

The protein localises to the cytoplasm. The enzyme catalyses L-aspartate + H(+) = beta-alanine + CO2. It functions in the pathway cofactor biosynthesis; (R)-pantothenate biosynthesis; beta-alanine from L-aspartate: step 1/1. Catalyzes the pyruvoyl-dependent decarboxylation of aspartate to produce beta-alanine. In Cellvibrio japonicus (strain Ueda107) (Pseudomonas fluorescens subsp. cellulosa), this protein is Aspartate 1-decarboxylase.